Reading from the N-terminus, the 679-residue chain is MLYPQHFDVIVVGGGHAGTEAALAAARMGCKTLLLSHNIETLGQMSCNPSIGGIGKGHLVKEVDALGGAMAAATDEGGIQFRILNSSKGPAVRATRAQADRLLYKAAIRRRLENQPNLWLFQQAVDDLMVEGDRVVGAVTQAGIKFRAKTVVLTAGTFLDGKIHVGLNNYAAGRAGDPPAVRLSARLKELKLPQGRLKTGTPPRLDGRSIDFSKCGEQPGDGMPGGMSPVMPVFSFMGRVEQHPPQMSCWTTHTNERTHEIIRSGFDRSPMFTGKIEGVGPRYCPSVEDKINRFADKDSHQIFLEPEGLTTNEYYPNGISTSLPFDIQYALVRSMAGLENAHILRPGYAIEYDYFDPQQLKSSFETRAIGGLFFAGQINGTTGYEEAAAQGLFAGVNAALQAGAQTSWQQETWVPGRDEAYLGVLVDDLITKGVTEPYRMFTSRAEFRLQLREDNADMRLTETGRRLGLVDDARWEAFSRKREAVSRETERLRSLWVSPKNLTATESERVLGKSIEHEYSLADLLRRPDVNYANLMSLEGGKYASAELNIPVSRETPAVPLPEAVFAAVVIEQVEIVAKYAGYIDRQIEEVGRAAHYENLKLPLELDYLQVSALSFEARQKLSKHRPETLGQASRLSGITPAAISLLLVHLKKSNFKGFAAAGKVTAPSESGDVQQGVI.

13–18 contributes to the FAD binding site; that stretch reads GGGHAG. NAD(+) is bound at residue 280 to 294; it reads GPRYCPSVEDKINRF.

It belongs to the MnmG family. Homodimer. Heterotetramer of two MnmE and two MnmG subunits. Requires FAD as cofactor.

It is found in the cytoplasm. Functionally, NAD-binding protein involved in the addition of a carboxymethylaminomethyl (cmnm) group at the wobble position (U34) of certain tRNAs, forming tRNA-cmnm(5)s(2)U34. This chain is tRNA uridine 5-carboxymethylaminomethyl modification enzyme MnmG, found in Albidiferax ferrireducens (strain ATCC BAA-621 / DSM 15236 / T118) (Rhodoferax ferrireducens).